Reading from the N-terminus, the 556-residue chain is CDP-diacylglycerol--glycerol-3-phosphate 3-phosphatidyltransferase, mitochondrial (556 aa).

The N-terminal 28 residues, 1-28, are a transit peptide targeting the mitochondrion; that stretch reads MAVAAAAAAGPVFWRRLLGLLPGRPGLA. Phosphoserine is present on S49. Position 124–131 (124–131) interacts with ATP; the sequence is ASLYLGTG. 2 PLD phosphodiesterase domains span residues 215–241 and 460–493; these read TIGLQHIKVYLFDNSVILSGANLSDSY and RGWTFHAKGLWLYLAGSSLPCLTLIGSPNFGYRS. Active-site residues include H220, K222, and D227.

This sequence belongs to the CDP-alcohol phosphatidyltransferase class-II family.

The protein resides in the mitochondrion. The enzyme catalyses a CDP-1,2-diacyl-sn-glycerol + sn-glycerol 3-phosphate = a 1,2-diacyl-sn-glycero-3-phospho-(1'-sn-glycero-3'-phosphate) + CMP + H(+). It participates in phospholipid metabolism; phosphatidylglycerol biosynthesis; phosphatidylglycerol from CDP-diacylglycerol: step 1/2. With respect to regulation, activated by calcium and magnesium and inhibited by other bivalent cations. Its function is as follows. Functions in the biosynthesis of the anionic phospholipids phosphatidylglycerol and cardiolipin. This is CDP-diacylglycerol--glycerol-3-phosphate 3-phosphatidyltransferase, mitochondrial (PGS1) from Homo sapiens (Human).